Here is a 576-residue protein sequence, read N- to C-terminus: Sulfite reductase [NADPH] hemoprotein beta-component (576 aa).

Residues 1–12 (MNVKTEPDRSRD) are compositionally biased toward basic and acidic residues. The tract at residues 1–25 (MNVKTEPDRSRDVSQPLDKLGPDET) is disordered. Cysteine 441, cysteine 447, cysteine 486, and cysteine 490 together coordinate [4Fe-4S] cluster. Cysteine 490 contributes to the siroheme binding site.

It belongs to the nitrite and sulfite reductase 4Fe-4S domain family. In terms of assembly, alpha(8)-beta(8). The alpha component is a flavoprotein, the beta component is a hemoprotein. Siroheme serves as cofactor. It depends on [4Fe-4S] cluster as a cofactor.

It catalyses the reaction hydrogen sulfide + 3 NADP(+) + 3 H2O = sulfite + 3 NADPH + 4 H(+). It participates in sulfur metabolism; hydrogen sulfide biosynthesis; hydrogen sulfide from sulfite (NADPH route): step 1/1. In terms of biological role, component of the sulfite reductase complex that catalyzes the 6-electron reduction of sulfite to sulfide. This is one of several activities required for the biosynthesis of L-cysteine from sulfate. This Nitrobacter hamburgensis (strain DSM 10229 / NCIMB 13809 / X14) protein is Sulfite reductase [NADPH] hemoprotein beta-component.